The primary structure comprises 328 residues: Biotin synthase (328 aa).

One can recognise a Radical SAM core domain in the interval 53–282 (FHGNRVDLCA…ATTIRYAGGR (230 aa)). Cys71, Cys75, and Cys78 together coordinate [4Fe-4S] cluster. [2Fe-2S] cluster contacts are provided by Ser115, Cys147, Cys207, and Arg277.

It belongs to the radical SAM superfamily. Biotin synthase family. Homodimer. It depends on [4Fe-4S] cluster as a cofactor. [2Fe-2S] cluster serves as cofactor.

It catalyses the reaction (4R,5S)-dethiobiotin + (sulfur carrier)-SH + 2 reduced [2Fe-2S]-[ferredoxin] + 2 S-adenosyl-L-methionine = (sulfur carrier)-H + biotin + 2 5'-deoxyadenosine + 2 L-methionine + 2 oxidized [2Fe-2S]-[ferredoxin]. It participates in cofactor biosynthesis; biotin biosynthesis; biotin from 7,8-diaminononanoate: step 2/2. Functionally, catalyzes the conversion of dethiobiotin (DTB) to biotin by the insertion of a sulfur atom into dethiobiotin via a radical-based mechanism. This is Biotin synthase from Desulforudis audaxviator (strain MP104C).